We begin with the raw amino-acid sequence, 371 residues long: UDP-N-acetylglucosamine--N-acetylmuramyl-(pentapeptide) pyrophosphoryl-undecaprenol N-acetylglucosamine transferase (371 aa).

Residues 15 to 17, N126, R169, S197, and Q298 contribute to the UDP-N-acetyl-alpha-D-glucosamine site; that span reads TGG.

It belongs to the glycosyltransferase 28 family. MurG subfamily.

It is found in the cell inner membrane. The enzyme catalyses di-trans,octa-cis-undecaprenyl diphospho-N-acetyl-alpha-D-muramoyl-L-alanyl-D-glutamyl-meso-2,6-diaminopimeloyl-D-alanyl-D-alanine + UDP-N-acetyl-alpha-D-glucosamine = di-trans,octa-cis-undecaprenyl diphospho-[N-acetyl-alpha-D-glucosaminyl-(1-&gt;4)]-N-acetyl-alpha-D-muramoyl-L-alanyl-D-glutamyl-meso-2,6-diaminopimeloyl-D-alanyl-D-alanine + UDP + H(+). It participates in cell wall biogenesis; peptidoglycan biosynthesis. Cell wall formation. Catalyzes the transfer of a GlcNAc subunit on undecaprenyl-pyrophosphoryl-MurNAc-pentapeptide (lipid intermediate I) to form undecaprenyl-pyrophosphoryl-MurNAc-(pentapeptide)GlcNAc (lipid intermediate II). The chain is UDP-N-acetylglucosamine--N-acetylmuramyl-(pentapeptide) pyrophosphoryl-undecaprenol N-acetylglucosamine transferase from Paramagnetospirillum magneticum (strain ATCC 700264 / AMB-1) (Magnetospirillum magneticum).